The primary structure comprises 320 residues: Protein HEXIM1 (320 aa).

The interval 1–124 is disordered; sequence MAEPLLSEFQ…RRRPSKKKRL (124 aa). Polar residues predominate over residues 9 to 19; that stretch reads FQHQPQTSNCT. Basic and acidic residues predominate over residues 24–47; the sequence is VHEERNPDRPPGAEERVPEEDSRW. A Phosphoserine modification is found at Ser-98. A compositionally biased stretch (basic residues) spans 109 to 124; the sequence is VGKKKHRRRPSKKKRL. The interval 111–138 is basic region; mediates nuclear localization and interaction with 7SK snRNA and NR3C1; that stretch reads KKKHRRRPSKKKRLWKPYYTLTWEEKKK. The tract at residues 163-166 is interaction with P-TEFb; that stretch reads PYNT. The autoinhibitory acidic region; in absence of 7SK snRNA interacts with the basic region preventing interaction with P-TEFb and modulating subcellular localization stretch occupies residues 171-211; sequence MDDHDQEEPDLKTGLYPKRAAAKSDDTSDEDFMEEAGEEDG. Residues 174-223 are disordered; it reads HDQEEPDLKTGLYPKRAAAKSDDTSDEDFMEEAGEEDGGSDGMGGDGSEF. Ser-194 bears the Phosphoserine mark. Thr-197 bears the Phosphothreonine mark. Over residues 197–212 the composition is skewed to acidic residues; sequence TSDEDFMEEAGEEDGG. Phosphoserine occurs at positions 198, 213, and 221. Residues 244–310 are a coiled coil; the sequence is SKQELIKEYL…LTENELHRQQ (67 aa). Residues 247-275 form a mediates interaction with CCNT1 region; sequence ELIKEYLELEKCLSRMEDENNRLRLESQR. Residues 271–316 form a required for inhibition of ESR1-dependent transcription region; it reads LESQRLDGDDARVRELELELDRLRAENLQLLTENELHRQQERAPLS.

The protein belongs to the HEXIM family. As to quaternary structure, homooligomer and heterooligomer with HEXIM2; probably dimeric. Core component of the 7SK RNP complex, at least composed of 7SK RNA, LARP7, MEPCE, HEXIM1 (or HEXIM2) and P-TEFb (composed of CDK9 and CCNT1/cyclin-T1). Interacts with the N-CoR complex through NCOR1. Interacts with ESR1 and NR3C1. May interact with NF-kappa-B through RELA. Interacts with CCNT2; mediates formation of a tripartite complex with KPNA2. Part of the HDP-RNP complex composed of at least HEXIM1, PRKDC, XRCC5, XRCC6, paraspeckle proteins (SFPQ, NONO, PSPC1, RBM14, and MATR3) and NEAT1 non-coding RNA.

The protein resides in the nucleus. It is found in the cytoplasm. In terms of biological role, transcriptional regulator which functions as a general RNA polymerase II transcription inhibitor. Core component of the 7SK RNP complex: in cooperation with 7SK snRNA sequesters P-TEFb in a large inactive 7SK snRNP complex preventing RNA polymerase II phosphorylation and subsequent transcriptional elongation. May also regulate NF-kappa-B, ESR1, NR3C1 and CIITA-dependent transcriptional activity. Plays a role in the regulation of DNA virus-mediated innate immune response by assembling into the HDP-RNP complex, a complex that serves as a platform for IRF3 phosphorylation and subsequent innate immune response activation through the cGAS-STING pathway. The sequence is that of Protein HEXIM1 (HEXIM1) from Bos taurus (Bovine).